The primary structure comprises 501 residues: CUGBP Elav-like family member 1 (501 aa).

The segment at N2 to R196 is binds strongly to URE. RRM domains are found at residues I16 to S99 and R108 to T188. Composition is skewed to low complexity over residues P274–G298 and S312–N323. Residues P274–N323 form a disordered region. A binds strongly to URE region spans residues L397 to Y501. The region spanning A416–S494 is the RRM 3 domain.

It belongs to the CELF/BRUNOL family.

It localises to the nucleus. The protein localises to the cytoplasm. RNA-binding protein implicated in the regulation of several post-transcriptional events. May be involved in mRNA translation activation and stability. Involved in the regulation of muscle-specific splicing of alpha actinin pre-mRNAs via the binding to the UR-repeat element (URE) at the branch point of the non-muscle (NM) exon. The chain is CUGBP Elav-like family member 1 (celf1) from Danio rerio (Zebrafish).